A 4061-amino-acid polypeptide reads, in one-letter code: Hybrid PKS-NRPS synthetase tasS (4061 aa).

One can recognise a Ketosynthase family 3 (KS3) domain in the interval 7–472; the sequence is QEPIAVIGMA…GTNAHAIIEG (466 aa). Residue Cys-180 is part of the active site. A malonyl-CoA:ACP transacylase (MAT) domain region spans residues 586–911; it reads VFTGQGAQWP…RQKNDVEELL (326 aa). Residues 977-1113 form an N-terminal hotdog fold region; the sequence is HPLLGRRCVE…ATVNVTFHEP (137 aa). The tract at residues 977-1280 is dehydratase (DH) domain; the sequence is HPLLGRRCVE…VRVQPFSVAG (304 aa). Residues 977–1282 form the PKS/mFAS DH domain; that stretch reads HPLLGRRCVE…VQPFSVAGPQ (306 aa). Residue His-1010 is the Proton acceptor; for dehydratase activity of the active site. The segment at 1128-1282 is C-terminal hotdog fold; it reads LANAEPQRLY…VQPFSVAGPQ (155 aa). Residue Asp-1188 is the Proton donor; for dehydratase activity of the active site. The methyltransferase (MT) domain stretch occupies residues 1425-1619; sequence LDRFYEEGFE…GFNGVETHTP (195 aa). Residues 2153–2325 form a ketoreductase (KR) domain region; it reads TYFLLGLSGE…GVVGSDMAIG (173 aa). Residues 2437 to 2516 form the Carrier 1 domain; the sequence is EAIKVVFDTF…LLVEEAVDKL (80 aa). Ser-2475 carries the post-translational modification O-(pantetheine 4'-phosphoryl)serine. Positions 2527–2617 are disordered; that stretch reads EHGGEPDLTQ…QKHQEQTSQS (91 aa). Residues 2556-2576 are compositionally biased toward low complexity; sequence TSAASSSDTGSDSSPTSNSVS. The span at 2577–2592 shows a compositional bias: polar residues; sequence ETQTGTPLETPMSTTE. The segment at 2632–3077 is condensation (C) domain; that stretch reads QMTFGQNRFW…ELATWDTESE (446 aa). Residues 3103-3510 form an adenylation (A) (KR) domain region; it reads QVIADHPDAV…RGYLTVEGRI (408 aa). The Carrier 2 domain maps to 3633–3712; sequence QNLTATERTL…SMAALLDDGV (80 aa). Residue Ser-3672 is modified to O-(pantetheine 4'-phosphoryl)serine. Positions 3813–3969 are reductase (RED) domain; it reads DIDVVLHCAA…LSPLEDAVEA (157 aa).

The protein in the C-terminal section; belongs to the NRP synthetase family.

The enzyme catalyses (2S,4S)-4-hydroxy-4-methylglutamate + 8 malonyl-CoA + 3 S-adenosyl-L-methionine + ATP + 8 NADPH + 11 H(+) = (2S)-3-[(2S)-3,5-dioxo-4-[(2E,4R,6R,8E,10E,12E)-4,6,12-trimethyltetradeca-2,8,10,12-tetraenoyl]pyrrolidin-2-yl]-2-hydroxy-2-methylpropanoate + AMP + 3 S-adenosyl-L-homocysteine + 8 CO2 + diphosphate + 8 NADP(+) + 8 CoA + 6 H2O. The protein operates within secondary metabolite biosynthesis. Its function is as follows. Hybrid PKS-NRPS synthetase; part of the gene cluster that mediates the biosynthesis of the tetramic acids Sch210971 and Sch210972, potential anti-HIV fungal natural product that contain a decalin core. The PKS module of tasS together with the enoylreductase tasC catalyze the formation of the polyketide unit which is then conjugated to 4-hydroxyl-4-methyl glutamate (HMG) by the condensation domain of the tasS NRPS module. One unique structural feature of Sch210971 and Sch210972 is the tetramic acid motif proposed to be derived from the non-proteinogenic amino acid HMG, by a Dieckmann-type condensation catalyzed by the reductase domain of tasS. The aldolase tasA catalyzes the aldol condensation of 2 molecules of pyruvic acid to yield the intermediate 4-hydroxyl-4-methyl-2-oxoglutarate (HMOG), which can then be stereoselectively transaminated, may be by tasG, to form HMG. The Diels-Alderase tas3 then uses the Dieckmann product of tasS as substrate and catalyzes the Diels-Alder cycloaddition to form the decalin ring of Sch210971 and Sch210972. The polypeptide is Hybrid PKS-NRPS synthetase tasS (Hapsidospora irregularis).